The sequence spans 555 residues: Poly(A) polymerase PAPa (555 aa).

Positions 1-20 are disordered; the sequence is MNNQAYGVTPPISVANSTPK. ATP is bound by residues 86–88, 99–101, Asp153, Lys214, Tyr223, and 232–233; these read FGS, DID, and GV. Residues Asp99, Asp101, and Asp153 each contribute to the Mg(2+) site. A disordered region spans residues 532-555; the sequence is KRKRAVSKNEGKKKPKSVGTVSAA.

The protein belongs to the poly(A) polymerase family. Requires Mg(2+) as cofactor. Mn(2+) serves as cofactor.

Its subcellular location is the nucleus. The enzyme catalyses RNA(n) + ATP = RNA(n)-3'-adenine ribonucleotide + diphosphate. Functionally, polymerase that creates the 3'-poly(A) tail of mRNA's. May acquire specificity through interaction with a cleavage and polyadenylation factor. This chain is Poly(A) polymerase PAPa (PAPA), found in Candida albicans (strain SC5314 / ATCC MYA-2876) (Yeast).